The primary structure comprises 163 residues: Nucleotide-binding protein Spro_1084 (163 aa).

The protein belongs to the YajQ family.

Functionally, nucleotide-binding protein. The polypeptide is Nucleotide-binding protein Spro_1084 (Serratia proteamaculans (strain 568)).